The sequence spans 236 residues: C-&gt;U-editing enzyme APOBEC-1 (236 aa).

Residues Lys10–Leu134 form the CMP/dCMP-type deaminase domain. His61 is a Zn(2+) binding site. Glu63 functions as the Proton donor in the catalytic mechanism. The Zn(2+) site is built by Cys93 and Cys96.

The protein belongs to the cytidine and deoxycytidylate deaminase family. In terms of assembly, homodimer. Interacts with A1CF; form an mRNA editing complex. Interacts with RBM47; form an mRNA editing complex. Found in a complex with CELF2/CUGBP2 and A1CF. Interacts with HNRPAB. Interacts with SYNCRIP. Zn(2+) serves as cofactor. As to expression, expressed exclusively in the intestine.

It is found in the cytoplasm. It localises to the nucleus. It catalyses the reaction a cytidine in mRNA + H2O + H(+) = a uridine in mRNA + NH4(+). It carries out the reaction cytidine(6666) in apoB mRNA + H2O + H(+) = uridine(6666) in apoB mRNA + NH4(+). Its function is as follows. Cytidine deaminase catalyzing the cytidine to uridine postranscriptional editing of a variety of mRNAs. Form complexes with cofactors that confer differential editing activity and selectivity. Responsible for the postranscriptional editing of a CAA codon for Gln to a UAA codon for stop in the apolipoprotein B mRNA. Also involved in CGA (Arg) to UGA (Stop) editing in the NF1 mRNA. May also play a role in the epigenetic regulation of gene expression by participating in DNA demethylation. In Oryctolagus cuniculus (Rabbit), this protein is C-&gt;U-editing enzyme APOBEC-1.